We begin with the raw amino-acid sequence, 165 residues long: Transcription elongation factor GreA (165 aa).

A coiled-coil region spans residues 55 to 78 (AAKEEQGKQELRVRQLTQLLESAK).

It belongs to the GreA/GreB family.

Functionally, necessary for efficient RNA polymerase transcription elongation past template-encoded arresting sites. The arresting sites in DNA have the property of trapping a certain fraction of elongating RNA polymerases that pass through, resulting in locked ternary complexes. Cleavage of the nascent transcript by cleavage factors such as GreA or GreB allows the resumption of elongation from the new 3'terminus. GreA releases sequences of 2 to 3 nucleotides. This chain is Transcription elongation factor GreA, found in Streptomyces coelicolor (strain ATCC BAA-471 / A3(2) / M145).